The primary structure comprises 595 residues: 2-succinyl-5-enolpyruvyl-6-hydroxy-3-cyclohexene-1-carboxylate synthase (595 aa).

The protein belongs to the TPP enzyme family. MenD subfamily. In terms of assembly, homodimer. Requires Mg(2+) as cofactor. Mn(2+) serves as cofactor. The cofactor is thiamine diphosphate.

It carries out the reaction isochorismate + 2-oxoglutarate + H(+) = 5-enolpyruvoyl-6-hydroxy-2-succinyl-cyclohex-3-ene-1-carboxylate + CO2. Its pathway is quinol/quinone metabolism; 1,4-dihydroxy-2-naphthoate biosynthesis; 1,4-dihydroxy-2-naphthoate from chorismate: step 2/7. The protein operates within cofactor biosynthesis; phylloquinone biosynthesis. Functionally, catalyzes the thiamine diphosphate-dependent decarboxylation of 2-oxoglutarate and the subsequent addition of the resulting succinic semialdehyde-thiamine pyrophosphate anion to isochorismate to yield 2-succinyl-5-enolpyruvyl-6-hydroxy-3-cyclohexene-1-carboxylate (SEPHCHC). The protein is 2-succinyl-5-enolpyruvyl-6-hydroxy-3-cyclohexene-1-carboxylate synthase of Synechocystis sp. (strain ATCC 27184 / PCC 6803 / Kazusa).